Consider the following 261-residue polypeptide: Protein unc-50 homolog (261 aa).

A run of 6 helical transmembrane segments spans residues 37–57, 82–102, 113–133, 166–186, 190–210, and 225–245; these read IFHY…YLCF, AFAV…AITF, VMFW…ATIG, SFFP…PILL, LFAA…YYYV, and VVFL…VVMG.

The protein belongs to the unc-50 family.

Its subcellular location is the membrane. The chain is Protein unc-50 homolog from Dictyostelium discoideum (Social amoeba).